Here is a 393-residue protein sequence, read N- to C-terminus: 4-hydroxyphenylpyruvate dioxygenase (393 aa).

VOC domains are found at residues 17–148 and 179–339; these read AFDH…LLER and FLDH…IFSK. His-182, His-267, and Glu-350 together coordinate Fe cation.

The protein belongs to the 4HPPD family. Requires Fe cation as cofactor.

The catalysed reaction is 3-(4-hydroxyphenyl)pyruvate + O2 = homogentisate + CO2. It functions in the pathway amino-acid degradation; L-phenylalanine degradation; acetoacetate and fumarate from L-phenylalanine: step 3/6. In terms of biological role, key enzyme in the degradation of tyrosine. This Caenorhabditis briggsae protein is 4-hydroxyphenylpyruvate dioxygenase (hpd-1).